We begin with the raw amino-acid sequence, 100 residues long: Large ribosomal subunit protein bL21 (100 aa).

Belongs to the bacterial ribosomal protein bL21 family. In terms of assembly, part of the 50S ribosomal subunit. Contacts protein L20.

This protein binds to 23S rRNA in the presence of protein L20. The sequence is that of Large ribosomal subunit protein bL21 from Corynebacterium kroppenstedtii (strain DSM 44385 / JCM 11950 / CIP 105744 / CCUG 35717).